The chain runs to 214 residues: Probable transaldolase (214 aa).

Residue K83 is the Schiff-base intermediate with substrate of the active site.

This sequence belongs to the transaldolase family. Type 3B subfamily.

Its subcellular location is the cytoplasm. The catalysed reaction is D-sedoheptulose 7-phosphate + D-glyceraldehyde 3-phosphate = D-erythrose 4-phosphate + beta-D-fructose 6-phosphate. Its pathway is carbohydrate degradation; pentose phosphate pathway; D-glyceraldehyde 3-phosphate and beta-D-fructose 6-phosphate from D-ribose 5-phosphate and D-xylulose 5-phosphate (non-oxidative stage): step 2/3. In terms of biological role, transaldolase is important for the balance of metabolites in the pentose-phosphate pathway. This Streptococcus equi subsp. zooepidemicus (strain MGCS10565) protein is Probable transaldolase.